A 1021-amino-acid polypeptide reads, in one-letter code: Disease resistance protein Pikm2-TS (1021 aa).

The segment at Met-1–Val-182 is structured coiled coil (CC) domain. Positions Thr-186–Lys-519 constitute an NB-ARC domain. The interval Pro-297–Asp-317 is disordered. LRR repeat units follow at residues Leu-612–Tyr-634, Met-659–Leu-682, and Glu-683–Leu-705. Positions Arg-719–Leu-751 are disordered. 6 LRR repeats span residues Leu-785–Gln-807, Ser-817–Ala-841, Pro-843–Ile-865, Thr-866–Ile-888, Lys-912–Ser-935, and Met-957–Asn-981.

The protein belongs to the disease resistance NB-LRR family. Constitutively expressed.

Functionally, disease resistance (R) protein. Resistance proteins guard the plant against pathogens that contain an appropriate avirulence protein via an indirect interaction with this avirulence protein. That triggers a defense system including the hypersensitive response, which restricts the pathogen growth. Contribution of Pikm-1 is required to recognize the effector avirulence protein AVR-Pik. This chain is Disease resistance protein Pikm2-TS, found in Oryza sativa subsp. japonica (Rice).